The following is a 306-amino-acid chain: Ornithine carbamoyltransferase (306 aa).

Residues 53–56, glutamine 80, arginine 104, and 131–134 contribute to the carbamoyl phosphate site; these read STRT and HPCQ. L-ornithine contacts are provided by residues asparagine 162, aspartate 219, and 223 to 224; that span reads SM. Residues 259 to 260 and arginine 287 contribute to the carbamoyl phosphate site; that span reads CL.

It belongs to the aspartate/ornithine carbamoyltransferase superfamily. OTCase family.

The protein localises to the cytoplasm. The enzyme catalyses carbamoyl phosphate + L-ornithine = L-citrulline + phosphate + H(+). It participates in amino-acid biosynthesis; L-arginine biosynthesis; L-arginine from L-ornithine and carbamoyl phosphate: step 1/3. In terms of biological role, reversibly catalyzes the transfer of the carbamoyl group from carbamoyl phosphate (CP) to the N(epsilon) atom of ornithine (ORN) to produce L-citrulline. The sequence is that of Ornithine carbamoyltransferase from Acinetobacter baylyi (strain ATCC 33305 / BD413 / ADP1).